Here is a 167-residue protein sequence, read N- to C-terminus: Large ribosomal subunit protein uL22 (167 aa).

The segment at 120–167 (GSTATTVEDEAPKAKGAKGAKAKKAPAKKAAAKKAPAKKFAGKKTAKR) is disordered. Residues 134–167 (KGAKGAKAKKAPAKKAAAKKAPAKKFAGKKTAKR) are compositionally biased toward basic residues.

This sequence belongs to the universal ribosomal protein uL22 family. Part of the 50S ribosomal subunit.

This protein binds specifically to 23S rRNA; its binding is stimulated by other ribosomal proteins, e.g. L4, L17, and L20. It is important during the early stages of 50S assembly. It makes multiple contacts with different domains of the 23S rRNA in the assembled 50S subunit and ribosome. In terms of biological role, the globular domain of the protein is located near the polypeptide exit tunnel on the outside of the subunit, while an extended beta-hairpin is found that lines the wall of the exit tunnel in the center of the 70S ribosome. The protein is Large ribosomal subunit protein uL22 of Koribacter versatilis (strain Ellin345).